The chain runs to 682 residues: Transcription activator of gluconeogenesis PODANS_4_8760 (682 aa).

The disordered stretch occupies residues 1-72 (MPEDGGPFGS…KDPLRPRRKK (72 aa)). The span at 9–21 (GSEAAEASGAMSE) shows a compositional bias: low complexity. Basic and acidic residues-rich tracts occupy residues 29–41 (HEPH…DRMS) and 54–67 (GEVK…DPLR). Residues 77-105 (CYACQRAHLTCGDERPCQRCIKRGLQDSC) constitute a DNA-binding region (zn(2)-C6 fungal-type). Disordered regions lie at residues 122-148 (EALR…RHHS), 181-211 (LTES…SGMV), 325-375 (PAGP…RPSK), 509-541 (NRNT…AASG), and 586-622 (TDKP…HSIL). Composition is skewed to polar residues over residues 185 to 206 (LPFN…SNPP), 329 to 345 (TSLQ…QPTT), and 354 to 373 (PTMS…NSRP).

The protein belongs to the ERT1/acuK family.

The protein resides in the nucleus. In terms of biological role, transcription factor which regulates nonfermentable carbon utilization. Activator of gluconeogenetic genes. This chain is Transcription activator of gluconeogenesis PODANS_4_8760, found in Podospora anserina (strain S / ATCC MYA-4624 / DSM 980 / FGSC 10383) (Pleurage anserina).